Consider the following 340-residue polypeptide: Probable complex I intermediate-associated protein 30, mitochondrial (340 aa).

This sequence belongs to the CIA30 family.

The protein resides in the mitochondrion. In terms of biological role, chaperone protein involved in the assembly of the mitochondrial NADH:ubiquinone oxidoreductase complex (complex I). Required for normal growth and reproduction. The polypeptide is Probable complex I intermediate-associated protein 30, mitochondrial (nuaf-1) (Caenorhabditis briggsae).